The following is a 274-amino-acid chain: Exosome complex component Rrp42 (274 aa).

The protein belongs to the RNase PH family. Rrp42 subfamily. Component of the archaeal exosome complex. Forms a hexameric ring-like arrangement composed of 3 Rrp41-Rrp42 heterodimers. The hexameric ring associates with a trimer of Rrp4 and/or Csl4 subunits.

Its subcellular location is the cytoplasm. In terms of biological role, non-catalytic component of the exosome, which is a complex involved in RNA degradation. Contributes to the structuring of the Rrp41 active site. The sequence is that of Exosome complex component Rrp42 from Pyrobaculum aerophilum (strain ATCC 51768 / DSM 7523 / JCM 9630 / CIP 104966 / NBRC 100827 / IM2).